A 299-amino-acid chain; its full sequence is Putative ankyrin repeat protein R864 (299 aa).

ANK repeat units follow at residues 78-107, 108-137, 139-167, 168-197, 199-227, 228-257, and 258-287; these read SLNK…NIES, NNNY…NIKS, NNRV…DIRS, NDDY…DIRS, YYYI…DIRA, YNNC…DIRN, and DNDY…DIKT.

The polypeptide is Putative ankyrin repeat protein R864 (Acanthamoeba polyphaga mimivirus (APMV)).